Consider the following 166-residue polypeptide: Small ribosomal subunit protein uS5 (166 aa).

One can recognise an S5 DRBM domain in the interval 12–75 (YIEKLVQVNR…EAARRNMIQV (64 aa)).

This sequence belongs to the universal ribosomal protein uS5 family. In terms of assembly, part of the 30S ribosomal subunit. Contacts proteins S4 and S8.

In terms of biological role, with S4 and S12 plays an important role in translational accuracy. Located at the back of the 30S subunit body where it stabilizes the conformation of the head with respect to the body. In Pseudomonas putida (strain ATCC 700007 / DSM 6899 / JCM 31910 / BCRC 17059 / LMG 24140 / F1), this protein is Small ribosomal subunit protein uS5.